The following is a 355-amino-acid chain: Fe-S cluster assembly protein DRE2 (355 aa).

Positions 23 to 156 are N-terminal SAM-like domain; it reads TSFNPRTLLL…KPDYSASVAV (134 aa). The interval 157 to 247 is linker; sequence PLRLRRKDNS…EDTLLTEEDM (91 aa). A disordered region spans residues 189 to 214; that stretch reads RKSVDMTDDVPEKDVPKVDSPKNDAP. Basic and acidic residues predominate over residues 190-213; sequence KSVDMTDDVPEKDVPKVDSPKNDA. [2Fe-2S] cluster-binding residues include C257, C268, C271, and C273. A fe-S binding site A region spans residues 257-273; sequence CAPRAGKRRRACKDCTC. C318, C321, C329, and C332 together coordinate [4Fe-4S] cluster. 2 consecutive short sequence motifs (cx2C motif) follow at residues 318-321 and 329-332; these read CGNC and CDGC. The fe-S binding site B stretch occupies residues 318–332; sequence CGNCSLGDAFRCDGC.

Belongs to the anamorsin family. Monomer. Interacts with TAH18. Interacts with MIA40. It depends on [2Fe-2S] cluster as a cofactor. Requires [4Fe-4S] cluster as cofactor.

It is found in the cytoplasm. The protein resides in the mitochondrion intermembrane space. Its function is as follows. Component of the cytosolic iron-sulfur (Fe-S) protein assembly (CIA) machinery required for the maturation of extramitochondrial Fe-S proteins. Part of an electron transfer chain functioning in an early step of cytosolic Fe-S biogenesis, facilitating the de novo assembly of a [4Fe-4S] cluster on the scaffold complex CFD1-NBP35. Electrons are transferred to DRE2 from NADPH via the FAD- and FMN-containing protein TAH18. TAH18-DRE2 are also required for the assembly of the diferric tyrosyl radical cofactor of ribonucleotide reductase (RNR), probably by providing electrons for reduction during radical cofactor maturation in the catalytic small subunit RNR2. The protein is Fe-S cluster assembly protein DRE2 of Botryotinia fuckeliana (strain B05.10) (Noble rot fungus).